Reading from the N-terminus, the 953-residue chain is Probable LRR receptor-like serine/threonine-protein kinase At1g53420 (953 aa).

An N-terminal signal peptide occupies residues 1–22; sequence MSLNRFLFTSFSFFLFFIVHFA. The Extracellular segment spans residues 23-566; that stretch reads SSATLPTQEG…SPRNGMSTGT (544 aa). LRR repeat units lie at residues 63–86, 88–110, 111–132, 135–158, 159–182, and 183–205; these read WSTI…LVGL, LLQE…WGVL, PLVN…EFGN, TLTS…GNLP, NIQQ…AKLT, and TLRD…IQKW. 2 N-linked (GlcNAc...) asparagine glycosylation sites follow: asparagine 100 and asparagine 132. 5 N-linked (GlcNAc...) asparagine glycosylation sites follow: asparagine 265, asparagine 315, asparagine 335, asparagine 378, and asparagine 423. Residues 567–587 traverse the membrane as a helical segment; it reads LHTLVVILSIFIVFLVFGTLW. At 588–953 the chain is on the cytoplasmic side; sequence KKGYLRSKSQ…SDRSESSADH (366 aa). The region spanning 624 to 901 is the Protein kinase domain; the sequence is FDSANRIGEG…VKMLEGKKMV (278 aa). Residues 630 to 638 and lysine 652 contribute to the ATP site; that span reads IGEGGFGPV. Tyrosine 697 carries the phosphotyrosine modification. The active-site Proton acceptor is aspartate 750. Position 783 is a phosphoserine (serine 783). Threonine 784 and threonine 789 each carry phosphothreonine. Tyrosine 797 bears the Phosphotyrosine mark.

Belongs to the protein kinase superfamily. Ser/Thr protein kinase family.

The protein resides in the membrane. It carries out the reaction L-seryl-[protein] + ATP = O-phospho-L-seryl-[protein] + ADP + H(+). It catalyses the reaction L-threonyl-[protein] + ATP = O-phospho-L-threonyl-[protein] + ADP + H(+). This is Probable LRR receptor-like serine/threonine-protein kinase At1g53420 from Arabidopsis thaliana (Mouse-ear cress).